We begin with the raw amino-acid sequence, 323 residues long: UDP-N-acetylenolpyruvoylglucosamine reductase (323 aa).

Residues 33–214 form the FAD-binding PCMH-type domain; sequence IGGPAEALFC…LSAVFTLTHG (182 aa). Catalysis depends on S243, which acts as the Proton donor. E315 is an active-site residue.

It belongs to the MurB family. It depends on FAD as a cofactor.

The protein localises to the cytoplasm. The catalysed reaction is UDP-N-acetyl-alpha-D-muramate + NADP(+) = UDP-N-acetyl-3-O-(1-carboxyvinyl)-alpha-D-glucosamine + NADPH + H(+). The protein operates within cell wall biogenesis; peptidoglycan biosynthesis. Its function is as follows. Cell wall formation. The sequence is that of UDP-N-acetylenolpyruvoylglucosamine reductase from Treponema denticola (strain ATCC 35405 / DSM 14222 / CIP 103919 / JCM 8153 / KCTC 15104).